Reading from the N-terminus, the 108-residue chain is Cyclin-dependent protein kinase inhibitor SMR13 (108 aa).

In terms of biological role, probable cyclin-dependent protein kinase (CDK) inhibitor that functions as a repressor of mitosis in the endoreduplication cell cycle. The polypeptide is Cyclin-dependent protein kinase inhibitor SMR13 (Arabidopsis thaliana (Mouse-ear cress)).